We begin with the raw amino-acid sequence, 207 residues long: Guanylate kinase (207 aa).

The Guanylate kinase-like domain occupies 4–184; it reads GTLYIVSAPS…ALSDLKTIIR (181 aa). 11–18 lines the ATP pocket; that stretch reads APSGAGKS.

This sequence belongs to the guanylate kinase family.

It localises to the cytoplasm. It catalyses the reaction GMP + ATP = GDP + ADP. Essential for recycling GMP and indirectly, cGMP. The chain is Guanylate kinase (gmk) from Salmonella typhimurium (strain LT2 / SGSC1412 / ATCC 700720).